A 259-amino-acid polypeptide reads, in one-letter code: DnaJ homolog subfamily C member 9 (259 aa).

In terms of domain architecture, J spans 15–82 (DLYQVLGVRR…EQKAVYDEQG (68 aa)). S109 is subject to Phosphoserine. Positions 171–248 (EIPAYSAFVK…EAKYCKPSKG (78 aa)) are required for histone binding.

As to quaternary structure, forms a co-chaperone complex with MCM2 and histone H3.3-H4 dimers. Within the complex, interacts (via C-terminus) with MCM2 (via N-terminus); the interaction is histone-dependent. Within the complex, interacts (via C-terminus) with histone H3.3-H4 heterodimers; the interaction is direct. Interacts with histones H4, H3.3, H3.2 and H3.1, but not with CENPA or the testis-specific histone H3.1t. Interacts (via J domain) with HSPA1A, HSPA1B and HSPA8. May interact with TONSL; the interaction seems to be histone-dependent. May interact with HSPA8 and BAG2; the interactions seem to be histone-dependent.

The protein localises to the nucleus. The protein resides in the cytoplasm. It localises to the cell membrane. Acts as a dual histone chaperone and heat shock co-chaperone. As a histone chaperone, forms a co-chaperone complex with MCM2 and histone H3-H4 heterodimers; and may thereby assist MCM2 in histone H3-H4 heterodimer recognition and facilitate the assembly of histones into nucleosomes. May also act as a histone co-chaperone together with TONSL. May recruit histone chaperones ASF1A, NASP and SPT2 to histone H3-H4 heterodimers. Also plays a role as co-chaperone of the HSP70 family of molecular chaperone proteins, such as HSPA1A, HSPA1B and HSPA8. As a co-chaperone, may play a role in the recruitment of HSP70-type molecular chaperone machinery to histone H3-H4 substrates, thereby maintaining the histone structural integrity. Exhibits activity to assemble histones onto DNA in vitro. This chain is DnaJ homolog subfamily C member 9 (Dnajc9), found in Mus musculus (Mouse).